Reading from the N-terminus, the 1487-residue chain is Protein cft1 (1487 aa).

Residues 486–504 (DLDLDDEDLEDDDDDDLYG) show a composition bias toward acidic residues. A disordered region spans residues 486–513 (DLDLDDEDLEDDDDDDLYGEESASPEQA).

Belongs to the CFT1 family.

Its subcellular location is the nucleus. Functionally, RNA-binding component of the cleavage and polyadenylation factor (CPF) complex, which plays a key role in polyadenylation-dependent pre-mRNA 3'-end formation and cooperates with cleavage factors including the CFIA complex and hrp1/CFIB. Involved in poly(A) site recognition. May be involved in coupling transcription termination and mRNA 3'-end formation. This is Protein cft1 (paa-3) from Neurospora crassa (strain ATCC 24698 / 74-OR23-1A / CBS 708.71 / DSM 1257 / FGSC 987).